Here is a 359-residue protein sequence, read N- to C-terminus: MTLESMMACCLSDEVKESKRINAEIEKQLRRDKRDARRELKLLLLGTGESGKSTFIKQMRIIHGAGYSEEDKRGFTKLVYQNIFTAMQAMIRAMETLKILYKYEQNKANALLIREVDVEKVTTFEHRYVSAIKTLWNDPGIQECYDRRREYQLSDSAKYYLTDVDRIATSGYLPTQQDVLRVRVPTTGIIEYPFDLENIIFRMVDVGGQRSERRKWIHCFENVTSIMFLVALSEYDQVLVESDNENRMEESKALFRTIVTYPWFQNSSVILFLNKKDLLEDKILHSHLVDYFPEFDGPQRDAQAAREFILKMFVDLNPDSDKIIYSHFTCATDTENIRFVFAAVKDTILQLNLKEYNLV.

Residues Cys9 and Cys10 are each lipidated (S-palmitoyl cysteine). The region spanning 38-359 is the G-alpha domain; sequence RELKLLLLGT…QLNLKEYNLV (322 aa). The interval 41 to 54 is G1 motif; sequence KLLLLGTGESGKST. GTP is bound by residues 46-53 and 180-183; these read GTGESGKS and LRVR. Residue Ser53 coordinates Mg(2+). The segment at 178-186 is G2 motif; the sequence is DVLRVRVPT. Thr186 contributes to the Mg(2+) binding site. A G3 motif region spans residues 201-210; it reads FRMVDVGGQR. Residues 270–277 are G4 motif; that stretch reads ILFLNKKD. GTP-binding positions include 274-277 and Ala331; that span reads NKKD. Positions 329-334 are G5 motif; that stretch reads TCATDT.

The protein belongs to the G-alpha family. G(q) subfamily. As to quaternary structure, g proteins are composed of 3 units; alpha, beta and gamma. The alpha chain contains the guanine nucleotide binding site. Interacts with RGS22. Interacts with NTSR1.

It localises to the cell membrane. The protein resides in the cytoplasm. It carries out the reaction GTP + H2O = GDP + phosphate + H(+). In terms of biological role, guanine nucleotide-binding proteins (G proteins) function as transducers downstream of G protein-coupled receptors (GPCRs) in numerous signaling cascades. The alpha chain contains the guanine nucleotide binding site and alternates between an active, GTP-bound state and an inactive, GDP-bound state. Signaling by an activated GPCR promotes GDP release and GTP binding. The alpha subunit has a low GTPase activity that converts bound GTP to GDP, thereby terminating the signal. Both GDP release and GTP hydrolysis are modulated by numerous regulatory proteins. Signaling is mediated via phospholipase C-beta-dependent inositol lipid hydrolysis for signal propagation: activates phospholipase C-beta: following GPCR activation, GNA11 activates PLC-beta (PLCB1, PLCB2, PLCB3 or PLCB4), leading to production of diacylglycerol (DAG) and inositol 1,4,5-trisphosphate (IP3). Transduces FFAR4 signaling in response to long-chain fatty acids (LCFAs). Together with GNAQ, required for heart development. In the respiratory epithelium, transmits OXGR1-dependent signals that lead to downstream intracellular Ca(2+) release and mucocilliary clearance of airborne pathogens. This Bos taurus (Bovine) protein is Guanine nucleotide-binding protein subunit alpha-11 (GNA11).